The sequence spans 87 residues: Beta-toxin CsE3 (87 aa).

An N-terminal signal peptide occupies residues 1–19 (MNSLLIIAACLALIGTVWA). Positions 20-85 (KEGYIVNYHT…VWPLPKKKCN (66 aa)) constitute an LCN-type CS-alpha/beta domain. 4 disulfides stabilise this stretch: Cys31–Cys84, Cys35–Cys60, Cys44–Cys65, and Cys48–Cys67. Asn85 carries the asparagine amide modification.

The protein belongs to the long (4 C-C) scorpion toxin superfamily. Sodium channel inhibitor family. Beta subfamily. Expressed by the venom gland.

It localises to the secreted. Beta toxins bind voltage-independently at site-4 of sodium channels (Nav) and shift the voltage of activation toward more negative potentials thereby affecting sodium channel activation and promoting spontaneous and repetitive firing. The polypeptide is Beta-toxin CsE3 (Centruroides sculpturatus (Arizona bark scorpion)).